The primary structure comprises 189 residues: UPF0301 protein CF0373 (189 aa).

Belongs to the UPF0301 (AlgH) family.

The polypeptide is UPF0301 protein CF0373 (Chlamydia felis (strain Fe/C-56) (Chlamydophila felis)).